Here is a 191-residue protein sequence, read N- to C-terminus: dTTP/UTP pyrophosphatase (191 aa).

Residue D64 is the Proton acceptor of the active site.

This sequence belongs to the Maf family. YhdE subfamily. The cofactor is a divalent metal cation.

It localises to the cytoplasm. The enzyme catalyses dTTP + H2O = dTMP + diphosphate + H(+). It carries out the reaction UTP + H2O = UMP + diphosphate + H(+). In terms of biological role, nucleoside triphosphate pyrophosphatase that hydrolyzes dTTP and UTP. May have a dual role in cell division arrest and in preventing the incorporation of modified nucleotides into cellular nucleic acids. The sequence is that of dTTP/UTP pyrophosphatase from Thermosipho africanus (strain TCF52B).